The sequence spans 410 residues: Translation initiation factor 2 subunit gamma (410 aa).

One can recognise a tr-type G domain in the interval 6 to 203 (QSEVNIGMVG…AIQEFIPTPK (198 aa)). The G1 stretch occupies residues 15–22 (GHVDHGKT). Mg(2+)-binding residues include Asp18, Thr22, Gly43, and Ser45. 18–23 (DHGKTS) contacts GTP. Positions 43–47 (GISIR) are G2. Cys58, Cys61, Cys73, and Cys76 together coordinate Zn(2+). The segment at 90–93 (DAPG) is G3. GTP-binding positions include 146–149 (NKID) and 181–183 (SAH). The G4 stretch occupies residues 146 to 149 (NKID). Residues 181 to 183 (SAH) form a G5 region.

The protein belongs to the TRAFAC class translation factor GTPase superfamily. Classic translation factor GTPase family. EIF2G subfamily. Heterotrimer composed of an alpha, a beta and a gamma chain. It depends on Mg(2+) as a cofactor.

It carries out the reaction GTP + H2O = GDP + phosphate + H(+). In terms of biological role, eIF-2 functions in the early steps of protein synthesis by forming a ternary complex with GTP and initiator tRNA. The protein is Translation initiation factor 2 subunit gamma of Methanococcus maripaludis (strain C6 / ATCC BAA-1332).